The following is a 1196-amino-acid chain: Beta/alpha-amylase (1196 aa).

The N-terminal stretch at 1–35 (MTLYRSLWKKGCMLLLSLVLSLTAFIGSPSNTASA) is a signal peptide. Positions 36–454 (AVADDFQASV…IISKAKPDNN (419 aa)) are beta-amylase. Aspartate 76 contributes to the substrate binding site. Ca(2+) is bound by residues glutamate 83 and aspartate 87. Substrate-binding residues include histidine 116 and aspartate 124. Cysteine 118 and cysteine 126 are oxidised to a cystine. Residue glutamate 170 coordinates Ca(2+). The active-site Proton donor is glutamate 198. The substrate site is built by lysine 314, histidine 319, and threonine 357. Glutamate 394 acts as the Proton acceptor in catalysis. Residues 395-396 (NA) and arginine 423 contribute to the substrate site. 2 repeats span residues 455 to 558 (GGTG…APAG) and 565 to 668 (GGTT…APSG). Positions 544 to 553 (NSGNAGTITS) are enriched in polar residues. The tract at residues 544–566 (NSGNAGTITSGAPAGANPGDGGG) is disordered. The interval 669 to 1196 (SVLSVVTSTY…APKEVKVFTK (528 aa)) is alpha-amylase.

The protein in the N-terminal section; belongs to the glycosyl hydrolase 14 family. It in the C-terminal section; belongs to the glycosyl hydrolase 13 family. The cofactor is Ca(2+).

It localises to the secreted. It carries out the reaction Hydrolysis of (1-&gt;4)-alpha-D-glucosidic linkages in polysaccharides so as to remove successive maltose units from the non-reducing ends of the chains.. The enzyme catalyses Endohydrolysis of (1-&gt;4)-alpha-D-glucosidic linkages in polysaccharides containing three or more (1-&gt;4)-alpha-linked D-glucose units.. The precursor protein is proteolytically cleaved to produce multiform beta-amylases and a 48 kDa alpha-amylase after secretion. The polypeptide is Beta/alpha-amylase (Paenibacillus polymyxa (Bacillus polymyxa)).